Here is a 395-residue protein sequence, read N- to C-terminus: NAD(P)H-quinone oxidoreductase subunit H (395 aa).

It belongs to the complex I 49 kDa subunit family. In terms of assembly, NDH-1 can be composed of about 15 different subunits; different subcomplexes with different compositions have been identified which probably have different functions.

The protein localises to the cellular thylakoid membrane. The enzyme catalyses a plastoquinone + NADH + (n+1) H(+)(in) = a plastoquinol + NAD(+) + n H(+)(out). The catalysed reaction is a plastoquinone + NADPH + (n+1) H(+)(in) = a plastoquinol + NADP(+) + n H(+)(out). NDH-1 shuttles electrons from an unknown electron donor, via FMN and iron-sulfur (Fe-S) centers, to quinones in the respiratory and/or the photosynthetic chain. The immediate electron acceptor for the enzyme in this species is believed to be plastoquinone. Couples the redox reaction to proton translocation, and thus conserves the redox energy in a proton gradient. Cyanobacterial NDH-1 also plays a role in inorganic carbon-concentration. This chain is NAD(P)H-quinone oxidoreductase subunit H, found in Prochlorococcus marinus (strain MIT 9312).